Reading from the N-terminus, the 192-residue chain is Imidazoleglycerol-phosphate dehydratase (192 aa).

It belongs to the imidazoleglycerol-phosphate dehydratase family.

It is found in the cytoplasm. The enzyme catalyses D-erythro-1-(imidazol-4-yl)glycerol 3-phosphate = 3-(imidazol-4-yl)-2-oxopropyl phosphate + H2O. The protein operates within amino-acid biosynthesis; L-histidine biosynthesis; L-histidine from 5-phospho-alpha-D-ribose 1-diphosphate: step 6/9. The polypeptide is Imidazoleglycerol-phosphate dehydratase (Staphylococcus aureus (strain JH9)).